The sequence spans 233 residues: Orotidine 5'-phosphate decarboxylase (233 aa).

Substrate-binding positions include aspartate 13, lysine 35, 62-71 (DLKFHDIPNT), threonine 122, arginine 182, glutamine 191, glycine 211, and arginine 212. The active-site Proton donor is the lysine 64.

Belongs to the OMP decarboxylase family. Type 1 subfamily. In terms of assembly, homodimer.

The enzyme catalyses orotidine 5'-phosphate + H(+) = UMP + CO2. It functions in the pathway pyrimidine metabolism; UMP biosynthesis via de novo pathway; UMP from orotate: step 2/2. In terms of biological role, catalyzes the decarboxylation of orotidine 5'-monophosphate (OMP) to uridine 5'-monophosphate (UMP). This chain is Orotidine 5'-phosphate decarboxylase, found in Pseudomonas fluorescens (strain ATCC BAA-477 / NRRL B-23932 / Pf-5).